The chain runs to 167 residues: uncharacterized protein (167 aa).

Residues 115–167 (SYRSQPQLGFKSTPPAHSSVFHHSVKAPKEDQAQEAASRPLTSQDGWNPNIKK) are disordered.

This is an uncharacterized protein from Homo sapiens (Human).